We begin with the raw amino-acid sequence, 1219 residues long: FYVE, RhoGEF and PH domain-containing protein 5 (1219 aa).

4 disordered regions span residues 1-85 (MGSP…SCQI), 94-113 (EEDF…PTES), 201-227 (SDTQ…GQVP), and 310-367 (GRES…PSSV). Over residues 23 to 50 (EVFEEDSADAAEGEDQIEQEEPPNCDEE) the composition is skewed to acidic residues. The span at 201 to 214 (SDTQAASGTLSGYS) shows a compositional bias: polar residues. Basic and acidic residues predominate over residues 319-337 (REPEGAGLDSHRVRRKEDN). The segment covering 346 to 356 (SSGSFSQRSHL) has biased composition (polar residues). Over residues 357–367 (PSSGTSTPSSV) the composition is skewed to low complexity. The residue at position 555 (threonine 555) is a Phosphothreonine. The segment covering 586-599 (ESKQQSSEQEAESA) has biased composition (low complexity). Residues 586–644 (ESKQQSSEQEAESAYTEPYKVCPISAAPREDLTSDEEQGSSEEEDSASRDPSLSHKGEG) are disordered. Positions 618–630 (TSDEEQGSSEEED) are enriched in acidic residues. The segment covering 631-644 (SASRDPSLSHKGEG) has biased composition (basic and acidic residues). One can recognise a DH domain in the interval 647–840 (RALVIAQELL…SKVTDRANES (194 aa)). One can recognise a PH 1 domain in the interval 869–963 (EFLKEGTLMR…WHYCLSRALP (95 aa)). The segment at 998–1057 (VTHAMMCMNCGCDFSLTVRRHHCHACGKIVCRNCSRNKYPLKCLKNRMAKVCDGCFRELK) adopts an FYVE-type zinc-finger fold. 8 residues coordinate Zn(2+): cysteine 1004, cysteine 1007, cysteine 1020, cysteine 1023, cysteine 1028, cysteine 1031, cysteine 1049, and cysteine 1052. Residues 1120–1218 (GSAISGYLSR…WMEAMEDASV (99 aa)) form the PH 2 domain.

In terms of tissue distribution, expressed in highly vascularized tissues, such as lung, kidney and ovary.

The protein resides in the cytoplasm. Its subcellular location is the cytoskeleton. It localises to the cell projection. It is found in the ruffle membrane. The protein localises to the endoplasmic reticulum. The protein resides in the golgi apparatus. Its subcellular location is the early endosome. In terms of biological role, activates CDC42, a member of the Ras-like family of Rho- and Rac proteins, by exchanging bound GDP for free GTP. Mediates VEGF-induced CDC42 activation. May regulate proangiogenic action of VEGF in vascular endothelial cells, including network formation, directional movement and proliferation. May play a role in regulating the actin cytoskeleton and cell shape. This chain is FYVE, RhoGEF and PH domain-containing protein 5 (Fgd5), found in Mus musculus (Mouse).